A 107-amino-acid polypeptide reads, in one-letter code: MARTKVHVRKGDTVLVITGKNAGKKGKVISVIPAKSRVVVEGVNVVKRHTKPTRKMPQGGIVEKEAPIHSSNVMLFCGKCNSPTRVGKKFLEDGEKVRVCKRCGETI.

The protein belongs to the universal ribosomal protein uL24 family. As to quaternary structure, part of the 50S ribosomal subunit.

One of two assembly initiator proteins, it binds directly to the 5'-end of the 23S rRNA, where it nucleates assembly of the 50S subunit. Its function is as follows. One of the proteins that surrounds the polypeptide exit tunnel on the outside of the subunit. The chain is Large ribosomal subunit protein uL24 from Pelotomaculum thermopropionicum (strain DSM 13744 / JCM 10971 / SI).